Reading from the N-terminus, the 207-residue chain is Small ribosomal subunit protein uS4c (207 aa).

The S4 RNA-binding domain occupies 92–150; the sequence is MRLDNILFRLGFVPTIPSARQLINHRHILVNNRIVDVPSFHCKPKDIITIGSPKTYQSI.

The protein belongs to the universal ribosomal protein uS4 family. As to quaternary structure, part of the 30S ribosomal subunit. Contacts protein S5. The interaction surface between S4 and S5 is involved in control of translational fidelity.

The protein localises to the plastid. Its subcellular location is the chloroplast. Functionally, one of the primary rRNA binding proteins, it binds directly to 16S rRNA where it nucleates assembly of the body of the 30S subunit. With S5 and S12 plays an important role in translational accuracy. This is Small ribosomal subunit protein uS4c (rps4) from Equisetum variegatum (Variegated horsetail).